A 289-amino-acid polypeptide reads, in one-letter code: Pyridoxal kinase PdxY (289 aa).

Substrate-binding positions include Ser9 and 44 to 45 (TQ). Residues Asp112, Val144, Glu149, and Lys182 each coordinate ATP. Asp221 is a substrate binding site.

This sequence belongs to the pyridoxine kinase family. PdxY subfamily. As to quaternary structure, homodimer. Mg(2+) is required as a cofactor.

The enzyme catalyses pyridoxal + ATP = pyridoxal 5'-phosphate + ADP + H(+). Its pathway is cofactor metabolism; pyridoxal 5'-phosphate salvage; pyridoxal 5'-phosphate from pyridoxal: step 1/1. Its function is as follows. Pyridoxal kinase involved in the salvage pathway of pyridoxal 5'-phosphate (PLP). Catalyzes the phosphorylation of pyridoxal to PLP. This chain is Pyridoxal kinase PdxY, found in Vibrio campbellii (strain ATCC BAA-1116).